Reading from the N-terminus, the 312-residue chain is Protoheme IX farnesyltransferase (312 aa).

Transmembrane regions (helical) follow at residues 34 to 54 (LVIF…HPVL), 56 to 76 (FTAI…NMAL), 119 to 139 (ALVN…YVVI), 152 to 172 (IVIG…AATG), 179 to 199 (LLLF…LALF), 225 to 245 (ILLY…LGYF), 247 to 267 (WVYG…AINV), and 283 to 303 (LFAF…LDVL).

It belongs to the UbiA prenyltransferase family. Protoheme IX farnesyltransferase subfamily.

The protein localises to the cell inner membrane. It carries out the reaction heme b + (2E,6E)-farnesyl diphosphate + H2O = Fe(II)-heme o + diphosphate. The protein operates within porphyrin-containing compound metabolism; heme O biosynthesis; heme O from protoheme: step 1/1. Functionally, converts heme B (protoheme IX) to heme O by substitution of the vinyl group on carbon 2 of heme B porphyrin ring with a hydroxyethyl farnesyl side group. The polypeptide is Protoheme IX farnesyltransferase (Nitrobacter hamburgensis (strain DSM 10229 / NCIMB 13809 / X14)).